We begin with the raw amino-acid sequence, 207 residues long: Venom allergen 5 (207 aa).

Cystine bridges form between Cys-4–Cys-16, Cys-8–Cys-105, and Cys-29–Cys-97. Residues 49-192 (DEHNRFRQKV…MKSHYLVCNY (144 aa)) form the SCP domain. Residue Tyr-111 is modified to Phosphotyrosine. Residue Lys-141 is glycosylated (N-linked (Glc) (glycation) lysine). Cys-173 and Cys-190 form a disulfide bridge.

It belongs to the CRISP family. Venom allergen 5-like subfamily. Post-translationally, glycosylated. In terms of tissue distribution, expressed by the venom gland.

It is found in the secreted. The protein is Venom allergen 5 of Polybia paulista (Neotropical social wasp).